We begin with the raw amino-acid sequence, 170 residues long: Transmembrane protein 252 (170 aa).

Transmembrane regions (helical) follow at residues isoleucine 8–isoleucine 28 and leucine 40–tryptophan 60. The segment at cysteine 112–tyrosine 147 is disordered.

It localises to the membrane. This chain is Transmembrane protein 252 (TMEM252), found in Pongo abelii (Sumatran orangutan).